We begin with the raw amino-acid sequence, 295 residues long: MAPSNLPPVFNATSQDIEMLLAAQCHLGSKNLQVHMEPYLWKTRPDGINVINIGKTWEKIVLAARIIAAIDNPADICVISARPYGQRAVLKFAAHTGAVAIAGRFTPGNFTNYITRSFKEPRLIIVTDPRTDSQAIKEASYVNIPVIALCDTDSPTEFVDVAIPTNNKGRHAIGLIWWMLAREVLRLRGTLANRETEWDVVVDLYFYRDPEAEENKEIEETKVPGAEEVGAAAIESGLVGDSWQAQATPGFSAGVAVPGTAVPGWEADVSTDWAASSAPAAETLADPAADPSVKW.

Belongs to the universal ribosomal protein uS2 family. Component of the small ribosomal subunit. Mature ribosomes consist of a small (40S) and a large (60S) subunit. The 40S subunit contains about 33 different proteins and 1 molecule of RNA (18S). The 60S subunit contains about 49 different proteins and 3 molecules of RNA (25S, 5.8S and 5S). Interacts with RPS21.

It is found in the cytoplasm. In terms of biological role, required for the assembly and/or stability of the 40S ribosomal subunit. Required for the processing of the 20S rRNA-precursor to mature 18S rRNA in a late step of the maturation of 40S ribosomal subunits. This Paracoccidioides brasiliensis (strain Pb18) protein is Small ribosomal subunit protein uS2.